Reading from the N-terminus, the 77-residue chain is SS18-like protein 2 (77 aa).

The SH2-binding signature appears at 50-53; the sequence is YQHV.

The protein belongs to the SS18 family.

In Homo sapiens (Human), this protein is SS18-like protein 2 (SS18L2).